Reading from the N-terminus, the 682-residue chain is L-type lectin-domain containing receptor kinase VI.2 (682 aa).

Positions 1 to 26 (MGTQRSMFIVSFLFKLFLFLSVHVRA) are cleaved as a signal peptide. The Extracellular portion of the chain corresponds to 27–310 (QRTTTNFAFR…AKKEGLNSQV (284 aa)). The legume-lectin like stretch occupies residues 29–277 (TTTNFAFRGF…AHYVMGWSFS (249 aa)). The chain crosses the membrane as a helical span at residues 311 to 331 (IVMIVALSAVMLVMLVLLFFF). Topologically, residues 332–682 (VMYKKRLGQE…RVSSTSRISQ (351 aa)) are cytoplasmic. The 275-residue stretch at 367–641 (FKKTGIIGTG…LRYLNGEENV (275 aa)) folds into the Protein kinase domain. ATP contacts are provided by residues 373 to 381 (IGTGGFGTV) and lysine 395. Aspartate 494 (proton acceptor) is an active-site residue.

In the C-terminal section; belongs to the protein kinase superfamily. Ser/Thr protein kinase family. It in the N-terminal section; belongs to the leguminous lectin family. As to expression, strongly expressed in the vascular system and trichomes of the leaves. Also expressed in guard cells, anthers, stigmas and germinating seeds, but not found in petals or roots. Increased susceptibility to the bacteria Pseudomonas syringae, characterized by stronger necrotic symptoms and higher bacterial proliferation.

It is found in the cell membrane. It carries out the reaction L-seryl-[protein] + ATP = O-phospho-L-seryl-[protein] + ADP + H(+). It catalyses the reaction L-threonyl-[protein] + ATP = O-phospho-L-threonyl-[protein] + ADP + H(+). Its function is as follows. Involved in negative regulation of abscisic acid response in seed germination. In terms of biological role, involved in resistance response to the pathogenic bacteria Pseudomonas syringae. The protein is L-type lectin-domain containing receptor kinase VI.2 of Arabidopsis thaliana (Mouse-ear cress).